The primary structure comprises 291 residues: Beta-lactamase CTX-M-6 (291 aa).

A signal peptide spans 1 to 28 (MMTQSIRRSMLTVMATLPLLFSSATLHA). Catalysis depends on serine 73, which acts as the Acyl-ester intermediate. 237 to 239 (KTG) contacts substrate.

Belongs to the class-A beta-lactamase family.

The enzyme catalyses a beta-lactam + H2O = a substituted beta-amino acid. Functionally, has cefotaxime-hydrolyzing activity. The sequence is that of Beta-lactamase CTX-M-6 (bla) from Salmonella typhimurium.